Consider the following 265-residue polypeptide: Glutamate racemase (265 aa).

Substrate contacts are provided by residues 10–11 (DS) and 42–43 (YG). The Proton donor/acceptor role is filled by Cys73. 74-75 (NT) lines the substrate pocket. Catalysis depends on Cys184, which acts as the Proton donor/acceptor. Residue 185–186 (TH) coordinates substrate.

The protein belongs to the aspartate/glutamate racemases family.

It catalyses the reaction L-glutamate = D-glutamate. It functions in the pathway cell wall biogenesis; peptidoglycan biosynthesis. In terms of biological role, provides the (R)-glutamate required for cell wall biosynthesis. The chain is Glutamate racemase from Pediococcus pentosaceus (strain ATCC 25745 / CCUG 21536 / LMG 10740 / 183-1w).